A 102-amino-acid chain; its full sequence is Trans-acting regulatory protein HvrA (102 aa).

A DNA-binding region spans residues 80–85; that stretch reads RGRKPK.

It belongs to the histone-like protein H-NS family. In terms of assembly, homodimer that oligomerizes on DNA into higher-order complexes that form bridges between disparate regions of DNA compacting it.

The protein resides in the cytoplasm. It is found in the nucleoid. Its function is as follows. A dim-light trans-acting activator of Puf and Puh expression, that has no effect on the expression of the Puc operon. Responsible for regulating light-harvesting-I and reaction center structural gene expression differentially from that of light-harvesting-II expression in response to alterations in light. Proper light regulation of light-harvesting and reaction center polypeptide synthesis is an important physiological trait that enables cells to adapt to ever-changing environmental conditions of light intensity. In Rhodobacter capsulatus (Rhodopseudomonas capsulata), this protein is Trans-acting regulatory protein HvrA (hvrA).